Reading from the N-terminus, the 49-residue chain is Lysozyme C (49 aa).

The 49-residue stretch at 1 to 49 (SKMKKCEFAKIAKEQHMDGYHGVSLADWVCLVNNESDFNTKAINRNKGI) folds into the C-type lysozyme domain. Glu-35 is an active-site residue.

Belongs to the glycosyl hydrolase 22 family. As to quaternary structure, monomer.

The protein resides in the secreted. The catalysed reaction is Hydrolysis of (1-&gt;4)-beta-linkages between N-acetylmuramic acid and N-acetyl-D-glucosamine residues in a peptidoglycan and between N-acetyl-D-glucosamine residues in chitodextrins.. In terms of biological role, lysozymes have primarily a bacteriolytic function; those in tissues and body fluids are associated with the monocyte-macrophage system and enhance the activity of immunoagents. The sequence is that of Lysozyme C (LYZ) from Pseudocheirus peregrinus (Common ring-tailed possum).